Reading from the N-terminus, the 379-residue chain is Carbamoyl phosphate synthase small chain (379 aa).

The segment at methionine 1–glutamate 183 is CPSase. L-glutamine-binding residues include serine 51, glycine 235, and glycine 237. The Glutamine amidotransferase type-1 domain maps to leucine 185–lysine 379. The active-site Nucleophile is cysteine 263. Residues phenylalanine 264, glutamine 267, asparagine 305, glycine 307, and phenylalanine 308 each contribute to the L-glutamine site. Residues histidine 353 and glutamate 355 contribute to the active site.

This sequence belongs to the CarA family. Composed of two chains; the small (or glutamine) chain promotes the hydrolysis of glutamine to ammonia, which is used by the large (or ammonia) chain to synthesize carbamoyl phosphate. Tetramer of heterodimers (alpha,beta)4.

The catalysed reaction is hydrogencarbonate + L-glutamine + 2 ATP + H2O = carbamoyl phosphate + L-glutamate + 2 ADP + phosphate + 2 H(+). The enzyme catalyses L-glutamine + H2O = L-glutamate + NH4(+). Its pathway is amino-acid biosynthesis; L-arginine biosynthesis; carbamoyl phosphate from bicarbonate: step 1/1. It participates in pyrimidine metabolism; UMP biosynthesis via de novo pathway; (S)-dihydroorotate from bicarbonate: step 1/3. In terms of biological role, small subunit of the glutamine-dependent carbamoyl phosphate synthetase (CPSase). CPSase catalyzes the formation of carbamoyl phosphate from the ammonia moiety of glutamine, carbonate, and phosphate donated by ATP, constituting the first step of 2 biosynthetic pathways, one leading to arginine and/or urea and the other to pyrimidine nucleotides. The small subunit (glutamine amidotransferase) binds and cleaves glutamine to supply the large subunit with the substrate ammonia. The chain is Carbamoyl phosphate synthase small chain from Corynebacterium diphtheriae (strain ATCC 700971 / NCTC 13129 / Biotype gravis).